The chain runs to 267 residues: Small ribosomal subunit protein uS2 (267 aa).

Residues 247–267 (LEDDILEDVEDEEEGDPEQGE) are disordered.

This sequence belongs to the universal ribosomal protein uS2 family.

The polypeptide is Small ribosomal subunit protein uS2 (Synechococcus sp. (strain JA-3-3Ab) (Cyanobacteria bacterium Yellowstone A-Prime)).